A 232-amino-acid polypeptide reads, in one-letter code: UPF0758 protein Clos_1766 (232 aa).

The 123-residue stretch at 110–232 (KIKGPDDVSN…YFSMKEHKLI (123 aa)) folds into the MPN domain. Zn(2+)-binding residues include histidine 181, histidine 183, and aspartate 194. The JAMM motif signature appears at 181–194 (HNHPSGDPNPSGED).

This sequence belongs to the UPF0758 family.

This is UPF0758 protein Clos_1766 from Alkaliphilus oremlandii (strain OhILAs) (Clostridium oremlandii (strain OhILAs)).